The following is a 156-amino-acid chain: Ribonuclease pancreatic (156 aa).

The N-terminal stretch at 1-28 is a signal peptide; that stretch reads MALEKSLVLLPLLVLALLVLGWIQPSLG. Lysine 35 and arginine 38 together coordinate substrate. Catalysis depends on histidine 40, which acts as the Proton acceptor. 4 disulfides stabilise this stretch: cysteine 54–cysteine 112, cysteine 68–cysteine 123, cysteine 86–cysteine 138, and cysteine 93–cysteine 100. Asparagine 62 is a glycosylation site (N-linked (GlcNAc...) asparagine). 69–73 provides a ligand contact to substrate; that stretch reads KPVNT. An N-linked (GlcNAc...) asparagine glycan is attached at asparagine 90. Position 94 (lysine 94) interacts with substrate. The N-linked (GlcNAc...) asparagine glycan is linked to asparagine 104. Residue arginine 113 participates in substrate binding. Histidine 147 (proton donor) is an active-site residue.

This sequence belongs to the pancreatic ribonuclease family. In terms of assembly, monomer. Interacts with and forms tight 1:1 complexes with RNH1. Dimerization of two such complexes may occur. Interaction with RNH1 inhibits this protein.

The protein localises to the secreted. It carries out the reaction an [RNA] containing cytidine + H2O = an [RNA]-3'-cytidine-3'-phosphate + a 5'-hydroxy-ribonucleotide-3'-[RNA].. It catalyses the reaction an [RNA] containing uridine + H2O = an [RNA]-3'-uridine-3'-phosphate + a 5'-hydroxy-ribonucleotide-3'-[RNA].. In terms of biological role, endonuclease that catalyzes the cleavage of RNA on the 3' side of pyrimidine nucleotides. Acts on single-stranded and double-stranded RNA. This Lemur catta (Ring-tailed lemur) protein is Ribonuclease pancreatic (RNASE1).